A 336-amino-acid polypeptide reads, in one-letter code: tRNA N6-adenosine threonylcarbamoyltransferase (336 aa).

3 residues coordinate Fe cation: H115, H119, and Y136. Substrate is bound by residues 136–140 (YVAGG), D168, E185, and S266. D294 contributes to the Fe cation binding site.

It belongs to the KAE1 / TsaD family. The cofactor is Fe(2+).

The protein resides in the cytoplasm. It carries out the reaction L-threonylcarbamoyladenylate + adenosine(37) in tRNA = N(6)-L-threonylcarbamoyladenosine(37) in tRNA + AMP + H(+). Functionally, required for the formation of a threonylcarbamoyl group on adenosine at position 37 (t(6)A37) in tRNAs that read codons beginning with adenine. Is probably involved in the transfer of the threonylcarbamoyl moiety of threonylcarbamoyl-AMP (TC-AMP) to the N6 group of A37. The chain is tRNA N6-adenosine threonylcarbamoyltransferase from Thermofilum pendens (strain DSM 2475 / Hrk 5).